The following is a 132-amino-acid chain: NADH-quinone oxidoreductase subunit A 2 (132 aa).

Helical transmembrane passes span 10-30 (WALLAYLFGALALCLLMLGLG), 66-86 (LVAMLFVIFGIEMPFLYLWAV), and 93-113 (WAGFVEATLFVSLLLVGLFYL).

This sequence belongs to the complex I subunit 3 family. As to quaternary structure, NDH-1 is composed of 13 different subunits. Subunits NuoA, H, J, K, L, M, N constitute the membrane sector of the complex.

The protein resides in the cell inner membrane. The catalysed reaction is a quinone + NADH + 5 H(+)(in) = a quinol + NAD(+) + 4 H(+)(out). NDH-1 shuttles electrons from NADH, via FMN and iron-sulfur (Fe-S) centers, to quinones in the respiratory chain. The immediate electron acceptor for the enzyme in this species is believed to be ubiquinone. Couples the redox reaction to proton translocation (for every two electrons transferred, four hydrogen ions are translocated across the cytoplasmic membrane), and thus conserves the redox energy in a proton gradient. This is NADH-quinone oxidoreductase subunit A 2 from Pseudomonas aeruginosa (strain UCBPP-PA14).